The sequence spans 6874 residues: MAASPVLPTEDGEGFLGIDDLHFSLQAEQEDTQKKTFTCWINSQLAKHTPPSVVSDLFADIKKGHVLLDLLEVLSGQQLPRDKGSNTFQCRINIEHALTFLKNRSIKLINIHVADIVEGNPSIILGLIWTIILHFHIEKLAQTLSCDYNQPSPEVVSVAASSPTSSPPTKKCSKAQAQARWQWSAKKALLQWAQEQCARSESVNVTDFKSSWRNGMAFLAVIHALRPDLIDMDSMRHRSNKDNLKEAFRIAEHELKIPKLLEPEDVDVVNPDEKSIMTYVAQFLKYSKDAPGPGDSTQAKVRDALVWLTLQEKRFQKMLKDSASETYCNKYHSLLSFMESLNEEKESFIDVLSLKGRMGELNEDESRLRQGWTSLMHQVAAWRAQLDDALPSPLKETEAWLKDIEGVVQEGVPTSQSYSEARTLIQGKLSSFKSLMGSFDYHSDVLMAFQSNAEKSLPAVPPVKLEEMTRRINNVLGKNFIPLLEFHDSKCSVLALLDEAKAKLDVWNGTYESKESVEVLLEDWHKFTGEKKFLIQLDASFQKCEEMYKNSARECESIREEYMMLEKNVHSCRQYIHNTKATLQRALMSWATFEEDLALLKASFDLTKKEQIKEVPVETLLQWNTKHTSLNEVGSFLIGVSSREVAASISKELRRLNKRWRKFITKTPLLKLPLVKIQDQPPGNSSGTSLSKESAMAAEPGGSRGEDVKAAEKQEVEDEESAGQLKVNEEVEGLIKQVTIWESQTKSILDLLQHGDHADGSSADTLQHLIAKGSVYEELLARTEDTLQMDVQSPSNLEPFQNVLRAGLQAKIQEAKQGVQITMVELSAVLKNLSDEPLELDLGLKVEEAQKELEVSILRAEQLLGQRERPGGFLLKYKEALEILNTNSLAKYLRAVEELKRTVPGGAKLQLEEQSRVASAKWEPLRHEISLYLQQLKIAIEEEKLRDNIARLEKQINKEKKLIRRGRTRGLRKEHEACLSPESIKCQLEHHVGVLRVLCEELTSPEDQQELKRALRDYEQKIARLLKCASEIHTTLQSSQGGALEERSALITTENGRRDADGEVPLEIPDNQLSTEKAMEPIKNFSQTSELKPQQEESIMEKEGKDCSASLSDLQERYDTQRGLLEQHLQDSKSRVTSDFASEQERSSACLQSKLAELQVLLADTDAHWEKFEITSLNLRRLMSDAEKPVLNQERDLLKGNEQVLHGLLNTRMESLEMALQIVLPLEKECSLLCASDLPLCTVAVQDLHPVEIDGVYQNLRDIRDSIAKQIRVCTSLEEPSNSVPRELHTLDQCAIQDIVLKCRLQLETMNQKVEMREDALDALEGFLASLRAAKLSAELPADRPAPKAPEVLSEDILLMKEKAGPLDERLRTLGINIKDAEGGENTTCERLVGALSVNLVAMDGQSKEEGPPEDKKLLEACSSKNLELFKNIQDLQNQISKIGLKDPTAPAVKHRKKSLLRLDKDLDGLEEEKVRIQKIAGSLPRFKDGSEKNVIQQCEDTAALWESTKASVTESLEQCGSALELLRQYQNIKNNLTALIQKEEGIISQQASYMGKDNLKKKIAEIETVKEEFSDHLEVVDKINQICKNLQYHLNKMKTFEDPPFEKEANAIVDRWLDINEKTEEYGENLGRALALWDKLFIIKNNIDEWTEQILGKAESHELTEEDRGRLKEELKVLEEQSAEFSRRVADIQSLLQSNEKPLELQVMESSVLSKMKDVKTHVAGGSNSYAPSGSTAELREDLDQAKTQMGMTESLLNALSPSDSLEIFTKLEEIQQQIFQQKHSMTVLENQIGCLTPELSELKRQYASVSNLFNTKKNALQDHFATFLNEQCKNFNDWFSNVKTNLQECFEPPETKLSLEQRLQKLSDFLTLGGGNSKIQQVETVLQHVKMLLPKAHVKELDSWLRSQELELENMESICQARAGELNNSFQQLLRLEDDCRSLSKWLTNQEENWGKMEVSGERMDLFSQALTRKREQFETVAQLSDSLKEHGLTEGEETIKESTHLIDRYQALWRQLHEIEEEDKLPAAEDQSFNDLADDVIHWIKEIKESLMALNSSEGKMPLEERIQKIKEIIALKPEGDAKIQMVMRQAEHCEAPLAQETFTDLSNQWDSTLHLANTYLSHQEKLVLEGEKYLQSKEDLRLMLTELKKQQEAGFALQPGLPEKQAQLKIYKKFLQKAQDLTSLLEELKSQGNYLLECTKNPSFSEEPWLEVKHLHESLLQQLQDSVQKLEGHVQEHSSYQVCLTDLSSTLDDISKEYFSLCDGSKDQIMAKERMQKLQELESRLRFQGGALKKASALAKSIKQNTSSVGQKIIKDDIRSLKYKQKDLENRIESAKQETENGLNSILKSKSSTEKHVKFSLPVEEMPATSEVPKPTRESAAVGESGGARETNTNSAVEMILSKQLSLNVQESMQNAQDEREVNELQNQPLELDIMLRNEQLKGMEELSTHLEARRAAIELLEQSQHLNQTEEQALVLPAARPSVCHLGSLQQELHTLKKTKERQYGLLSGFQDQLVMAEASLNTSLAEVESLKIGSLDSATYLGKIKKFLGSVENQQGSLSKLRTEWAHLSSLLAAADQKLVESQMKHLEHGWELVEQLAHRKCFQQATEHSELTCLLEKLQDLKVSLHQQQQRLTLSLNSPGQQAAIVDMVTPAAELQAIKCEFSGLKWQAELHMKRLWGEKDKKTLEDAINNLNKQMEALEPLNREVENRIKKCELQNRIKETLSWVKNTMAELVVPIALLPDNILSQIRKCKLIHDGILGNQQAVELLVEEVRGITPSLAPCEGDGLNALLEDLQSQHQALLLKSTERSQQLELKLEEKSKLFAIIGKVQLTLEESETLMSPTGDRASTEAELERRLAILKASQQQLQDTESALSAHLQELTNAYKDANVFERLFLDDQLKNLKARTNRTQRFLQNNGSELKQKMESYREFHDKAAVLQKEAECILHGGLLPLRQELEQDAKEQLGNLRDKLAAIRGSLSQVLTSEEVFDTIGLSWDGSLLARLQTQVLEREREVEGKIKQLDTFLIARDRHQASISKIRAVDLQIKKGAESLLKVPSMSPESTLLNAQTLIQKIEKSKRLRDEIIRKLSKNEAFDDSFKESEMQRLKLCAEENSRLQEALQNMLLELQPREMGEKEFREKLENALHVLKQIQSRLQQPLCVNLGVQHIQHEKETWEAFGEQVEAEMCGLRAVRITEEQREENDSGTGGMEAKLRDIEGLHMELSKSISLRADVLNDAYDSANRYDELVAGALRIITSLEATLLSYRVDLHNPQKTLELAHLKQEELQSSVADLRSLTETLGAISSPEAKEQLRCTLEVLAAKNSALKAGLEAQEAEEERCLENYKCFRKMKEEICSRLRKMEMDLGQSIFPLPRSYKEALARLEQSKALTSNLLSTKEDLVKLRQLLRHLRCRSTENDATCALGVASALWEKWLSLLEAAREWQQWGGELKREWKFISEEIEREAIILETLQEDLPEISKTNAAPTEELWQLLDSLCQHQESVEKQQLLLALLLQRVRSIQNIPEGTETGETIPALQEIGSMQERCDRLLHTTRKNKDLVQAEIQAQQSFLKEIKDVKRVFEQISTSFPNLAPEGHPERAEQFEELRSILQKGKLSFENIMEKLRIKYSEMYSIVPAEIGSQVEECRSALEDAEEKMSSEVSKSSPSSIMRRKIERINNGLHCVEKMLQQKSRNIEEAHEIQKKIWDELDLWHSKLNELDSEVQDFVEQDPGQAQEWMDNLMAPFQQHQQVSQRAESRTSQLNKATIKMEEYNDLLKSTEVWIEKTSCLLANPACYDSSRTLSHRASTLQMALEDSEQKHSLLHSIFTDLEDLSIIFETDDLIQTIHELSDQVAALQQQIMEALPHVQQVADDVVAIESEVKAMEKKVAKIKAILLSKEIFDFPPEEHLKHGEVILENIHPMKKTIAEIMTYQVELRLPQTGTKPLPVFQRTSQLLQDVKLLENVTQEQNELLKVVIKQTAECDEEIDSLKQMLTNYSAEISPEHVSQNQVADLPSLQGEMERLEKQILNLNQKKEDLLVDLKTAVLNLHEHLKQEQQEVGDKPSAGASECTVAERDASERKLSRTNSMSFLPVVKEEAEESSVKSEDGRRRTEPPSASWSFLGKHSKDLEGDGASSSSSATIVQDADGRISTCDSSMVHIIAPDSGSTEEGPAPSPRLSQTDEGATPPIEAALLDFPREQGAFESTVERSRPRPADILRVCKTQVAKLELWLQQANVAFEPETVDADMQQVVEEELAGCQAMLTEIEYKVASLLETCKDQGLGDCGTTQQEAEALSWKLKTVKCNLEKVQMVLQEKFSEDQHPSTLKKPSEPHDVDQPAGLSELDSVLTERPQFSRQKDAPQPQILELKPSEQKDLIKFTELNAKKTWLQGHQENEDANRQSASSSKVPSPGNAASDSTLPLQAQSGDKWQYLHHELTSRPNPSVPQLVEPQVALTTSTLPSVSVYNFRCPTADELQAYTTQLEELRQEANTIQTQGSMTEETYISLDKRLFELFLSLSRCLGSVEGLLQRPGLLREDACAQQVFFQKLALELKKLYLALGDKKDDFLKAVTWPGKEATLLPECIDALTVSLESVQSRAAWRDASLKAGLEHSRSYQNEVKRLYSQLIKKKTALQQSLNEISGQSISKQLQKADVHTAELQNSEKQVAKLRDEGERLRFPHGLLQDVYKLEDVLDSMWGILRARYLELSSPFLSKSLQTLLQGMAELVSIGKGKLAADPLQHAKSKAALQAQLQDHKAFFQKLVADMLLIQTYSATMFPPSLQKGEGFGAEQVAEVRALEEEACLRGAQLQSMLQKWEEFDDNYASLEKDLEALISSLPSVSLVEETEERLLERISFYQQIKRNIDGKHARLCQTLNEGRQLAASVSCPEPEGQIARLEEQWLSLNKRIDQELHRLQTLLKHLLSYSRDSDELTRWLETSQQTLNYWKEQSLNVSQDLNTIRSNIDRFFKFSKEVDERSSLKSAVMSTGNQLLHLKEADTATLRASLAQFEQKWTVLITQLPDIQEKLHQLQMEKLPSREAISEMISWMNAVEPQAAGKDTELSKSSASQVKHLLQKLKEFRMEMDYKQWVVDFVNQSLLQLSTCDVESKRYERTEFAEHLGEMNRQWQRVHGTLNRKIQHLEQLLESITENENKVQNLNSWLEAQEERLKMLQKPESAVSMEKLLLDCQDIENQLALKSKALDELRQSSLTMDGGDVPLLEDMASGIVELFQKKNNVTSQVHQLRASVQSVLQEWKACDKLYDEATMRTTQLTYSMEHSKPAVLSLQALACQVQNLEALQDEAENGERSWEKLQEVIGRLKASCPSMAGIIEEKCQDAHSRWTQVNQDLADQLQEARGQLQLWKAPHNAHAEAAAWLQQQEAKFQQLANTNLSGDNLADILPRALKDIKGLQSDLQKTKEAFLENSTLSDQLPQPEERSTPGLHSGQRHSLQTAAYLEKMLLAKSNEFEIVLAQFKDFTDRLAYSKDLIVHKEENLNKLYHEEKEEVPDLFLNHVLALTAQSPDIERLNEESLRLPLSDVTIKTLQSLNRQWIRATATALDHYSELQGNGLNEKFLHYCERWIQVLEKIQESLSVEVAHSLPALLEQQKTYEILEAEVSTNQAVADAYVTQSLQLLDTAEIEKRPEFVSEFSKLSDQWQRAARGVRQRKCDISRLVTQWRFFTTSVEDLLRFLADTSQLLSAVKEQDCYSLCQTRRLVHELKSKEIHLQRWRTTYALALEAGEKLRNTPSPETREFVDGQISRLQESWKDTELSLGEVISRLQSTAETWDQCKKKIKKLKKRLQALKAQSEDPLPELHEALHEEKELIKEVEKSLANWTHSLKELQTMKADLSQHILAEDVTVLKEQIQLLHRQWEDLCLRVAIRKQEIEDRLNSWIVFNEKNKELCAWLVQMENKVLQTADVSIEEMIEKLQKDCMEEISLFTENKLQLKQMGDQLIKASSKAKAAELEEKLSKINDRWQHLFDVIGSRVKKLKETFAFIQQLDKNMSNLRTWLARIESELSKPVVYDVCDNQEIQKRLAEQQDLQRDIEQHSAGVESVFNICDVLLHDSDACANETECDSIQQTTRSLDRRWRNICAMSMERRMKIEETWRLWQKFLDDYSRFEDWLKSAERTAACPNSSEVLYTNAKEELKRFEAFQRQIHERLTQLELINKQYRRLARENRTDTASKLKQMVHEGNQRWDNLQKRVTAILRRLRYFTNQREEFEGTRESILVWLTEMDLQLTNVEHFSESDAEDKMRQLNGFQQEITLNTNKIDQLIVFGEQLIQKSEPLDAVLIEDELEELHRYCQEVFGRVSRFHRRLTSHTPGLDDEKEASENETDIEDPREIQADSWRKRRESEEPTSPQSLCHLVPPALGHERSGCETPVSVDSIPLEWDHTGDVGGSSSHEDDEEGPFYSALSGKSISEGHPWHVPDSPSHSKHHYKHMEGDRTEAPVPTDASTPFKSDYVKLLLRQGTDDSKEGLKEAQQEDEQLATLTGQQPGAFDRWELIQAQELHSKLRLKQTVQQLKSDIGSIAAWLGKTEAELEALKLAEPPSDIQEIALRVKRLQEILKAFDTYKALMVSVNVSHKEYLPSQSPEATELQNRLHQLSLSWDSVQGVLDSWRGDLRQSLMQCQDFHQLSQDLLLWLATAESRRQKAHVTSPEADRQVLLECQKDLMRLEKELVARQPQVSSLREISSSLLVKGQGEDYIEAEEKVHVIEKKLKQLQEQVAQDLMSLQRSLDPDASLTSFDEVDSGEQLPAAFAKSPRPRWTFLEEEEEEEETDSRMPHLDSPGSSQPRRSFLSRVIRAALPLQLLLLLLLLLACLLPASEDDYSCTQANNFARSFYPMLRYTNGPPPT.

The actin-binding stretch occupies residues 1–286 (MAASPVLPTE…MTYVAQFLKY (286 aa)). At 1–6823 (MAASPVLPTE…RRSFLSRVIR (6823 aa)) the chain is on the cytoplasmic side. Calponin-homology (CH) domains are found at residues 31-136 (DTQK…LHFH) and 183-288 (WSAK…KYSK). Spectrin repeat units lie at residues 299-380 (AKVR…HQVA), 381-474 (AWRA…RINN), 475-577 (VLGK…QYIH), and 578-680 (NTKA…IQDQ). A coiled-coil region spans residues 299–6767 (AKVRDALVWL…PDASLTSFDE (6469 aa)). The disordered stretch occupies residues 675–723 (VKIQDQPPGNSSGTSLSKESAMAAEPGGSRGEDVKAAEKQEVEDEESAG). Positions 681–692 (PPGNSSGTSLSK) are enriched in polar residues. The span at 704–714 (RGEDVKAAEKQ) shows a compositional bias: basic and acidic residues. Spectrin repeat units lie at residues 727 to 834 (VNEE…KNLS), 835 to 928 (DEPL…LRHE), 929 to 1030 (ISLY…KCAS), 1120 to 1211 (TQRG…LLNT), 1262 to 1322 (DIRD…DALD), 1323 to 1409 (ALEG…QSKE), 1410 to 1514 (EGPP…ASVT), 1515 to 1626 (ESLE…KTEE), 1627 to 1728 (YGEN…AGGS), 1729 to 1820 (NSYA…TKKN), 1821 to 1928 (ALQD…AGEL), 1929 to 2026 (NNSF…EEED), 2027 to 2122 (KLPA…LANT), 2123 to 2233 (YLSH…SVQK), 2234 to 2350 (LEGH…LNSI), 2422 to 2503 (DERE…TLKK), 2504 to 2610 (TKER…KCFQ), 2611 to 2707 (QATE…EALE), 2708 to 2821 (PLNR…QLEL), 2822 to 2923 (KLEE…FLQN), 2924 to 3027 (NGSE…GKIK), 3028 to 3133 (QLDT…NMLL), 3134 to 3239 (ELQP…SLRA), 3240 to 3343 (DVLN…AQEA), 3344 to 3456 (EEER…QWGG), 3457 to 3563 (ELKR…TTRK), 3564 to 3669 (NKDL…SSEV), 3670 to 3767 (SKSS…ESRT), 3768 to 3870 (SQLN…QIME), 3871 to 3976 (ALPH…VTQE), and 3977 to 4074 (QNEL…KPSA). Residues 2338–2397 (SAKQETENGLNSILKSKSSTEKHVKFSLPVEEMPATSEVPKPTRESAAVGESGGARETNT) form a disordered region. The span at 2344 to 2354 (ENGLNSILKSK) shows a compositional bias: polar residues. Disordered regions lie at residues 4062–4152 (KQEQ…ATIV), 4171–4193 (APDS…TDEG), 4326–4348 (FSED…DQPA), and 4401–4429 (HQEN…DSTL). Residues 4081 to 4091 (VAERDASERKL) are compositionally biased toward basic and acidic residues. Ser-4096 bears the Phosphoserine mark. A compositionally biased stretch (basic and acidic residues) spans 4110 to 4122 (SSVKSEDGRRRTE). The Spectrin 36 repeat unit spans residues 4218-4337 (RSRPRPADIL…EDQHPSTLKK (120 aa)). The span at 4326 to 4345 (FSEDQHPSTLKKPSEPHDVD) shows a compositional bias: basic and acidic residues. Positions 4409–4429 (RQSASSSKVPSPGNAASDSTL) are enriched in polar residues. Spectrin repeat units lie at residues 4507 to 4626 (SMTE…RSYQ), 4627 to 4714 (NEVK…RARY), 4715 to 4823 (LELS…QSML), 4824 to 4929 (QKWE…QTLL), 4930 to 5037 (KHLL…QEKL), 5038 to 5150 (HQLQ…KIQH), 5151 to 5252 (LEQL…SQVH), 5253 to 5377 (QLRA…KAPH), 5378 to 5473 (NAHA…MLLA), 5474 to 5576 (KSNE…YSEL), 5577 to 5691 (QGNG…QWRF), 5692 to 5786 (FTTS…LSLG), 5787 to 5894 (EVIS…RVAI), 5895 to 6004 (RKQE…VKKL), 6005 to 6122 (KETF…EETW), 6123 to 6230 (RLWQ…LRYF), and 6231 to 6342 (TNQR…PGLD). A disordered region spans residues 5435–5459 (NSTLSDQLPQPEERSTPGLHSGQRH). Ser-5772 carries the post-translational modification Phosphoserine. Residues 6336-6473 (SHTPGLDDEK…TEAPVPTDAS (138 aa)) are disordered. Residues 6341–6354 (LDDEKEASENETDI) are compositionally biased toward acidic residues. Residues Ser-6348, Ser-6371, Ser-6400, Ser-6417, Ser-6418, Ser-6419, and Ser-6448 each carry the phosphoserine modification. Residues 6355–6372 (EDPREIQADSWRKRRESE) show a composition bias toward basic and acidic residues. Spectrin repeat units lie at residues 6450–6534 (SHSK…KLRL), 6535–6650 (KQTV…QCQD), and 6651–6767 (FHQL…SFDE). Residues 6790-6812 (EEEEEEEETDSRMPHLDSPGSSQ) form a disordered region. One can recognise a KASH domain in the interval 6815–6874 (RSFLSRVIRAALPLQLLLLLLLLLACLLPASEDDYSCTQANNFARSFYPMLRYTNGPPPT). The chain crosses the membrane as a helical; Anchor for type IV membrane protein span at residues 6824–6844 (AALPLQLLLLLLLLLACLLPA). Residues 6845-6874 (SEDDYSCTQANNFARSFYPMLRYTNGPPPT) are Perinuclear space-facing. A sufficient for interaction with SUN2 region spans residues 6861 to 6874 (FYPMLRYTNGPPPT).

Belongs to the nesprin family. In terms of assembly, core component of LINC complexes which are composed of inner nuclear membrane SUN domain-containing proteins coupled to outer nuclear membrane KASH domain-containing nesprins. SUN and KASH domain-containing proteins seem to bind each other promiscuously; however, some LINC complex constituents are tissue- or cell type-specific. At least SUN1/2-containing core LINC complexes are proposed to be hexameric composed of three protomers of each KASH and SUN domain-containing protein. The SUN2:SYNE2/KASH2 complex is a heterohexamer; the homotrimeric cloverleave-like conformation of the SUN domain is a prerequisite for LINC complex formation in which three separate SYNE2/KASH2 peptides bind at the interface of adjacent SUN domains. Interacts with EMD, LMNA, MKS3 and F-actin via its N-terminal domain. Interacts with DCTN1 and DYNC1I1/2; suggesting the association with the dynein-dynactin motor complex. Associates with kinesin motor complexes. Interacts with TMEM67. Interacts (via KASH domain) with TMEM258. Interacts with BROX; this interaction promotes SYN2 ubiquitination and facilitates the relaxation of mechanical stress imposed by compressive actin fibers at the rupture site. The disulfid bond with SUN2 is required for stability of the SUN2:SYNE2/KASH2 LINC complex under tensile forces though not required for the interaction. As to expression, C-terminal isoforms are highly expressed in the brain, hert and skeletal muscle. Isoform 1 (Nesprin-2 Giant) is most prevalent in the brain, skin, kidney and skeletal muscle.

It localises to the nucleus outer membrane. Its subcellular location is the sarcoplasmic reticulum membrane. It is found in the cell membrane. The protein localises to the cytoplasm. The protein resides in the cytoskeleton. It localises to the mitochondrion. Its subcellular location is the nucleus. It is found in the nucleoplasm. Its function is as follows. Multi-isomeric modular protein which forms a linking network between organelles and the actin cytoskeleton to maintain the subcellular spatial organization. As a component of the LINC (LInker of Nucleoskeleton and Cytoskeleton) complex involved in the connection between the nuclear lamina and the cytoskeleton. The nucleocytoplasmic interactions established by the LINC complex play an important role in the transmission of mechanical forces across the nuclear envelope and in nuclear movement and positioning. Specifically, SYNE2 and SUN2 assemble in arrays of transmembrane actin-associated nuclear (TAN) lines which are bound to F-actin cables and couple the nucleus to retrograde actin flow during actin-dependent nuclear movement. May be involved in nucleus-centrosome attachment. During interkinetic nuclear migration (INM) at G2 phase and nuclear migration in neural progenitors its LINC complex association with SUN1/2 and probable association with cytoplasmic dynein-dynactin motor complexes functions to pull the nucleus toward the centrosome; SYNE1 and SYNE2 seem to act redundantly in cerebellum, midbrain, brain stem, and other brain regions except cerebral cortex and hippocampus. During INM at G1 phase mediates respective LINC complex association with kinesin to push the nucleus away from the centrosome. Involved in nuclear migration in retinal photoreceptor progenitors. Required for centrosome migration to the apical cell surface during early ciliogenesis. This Mus musculus (Mouse) protein is Nesprin-2.